Here is a 228-residue protein sequence, read N- to C-terminus: Prolactin (228 aa).

The N-terminal stretch at 1 to 29 (MCTKRSSLKGSLLLLLLISSLLLSRSVDS) is a signal peptide. Cysteines 33 and 40 form a disulfide. 3 positions are modified to phosphoserine: Ser55, Ser63, and Ser119. Intrachain disulfides connect Cys87–Cys203 and Cys220–Cys228.

This sequence belongs to the somatotropin/prolactin family. As to quaternary structure, interacts with PRLR.

It localises to the secreted. Prolactin acts primarily on the mammary gland by promoting lactation. The polypeptide is Prolactin (PRL) (Isoodon macrourus (Short-nosed bandicoot)).